The chain runs to 183 residues: ATP-dependent protease subunit HslV (183 aa).

Thr-2 is a catalytic residue. Na(+) is bound by residues Gly-157, Cys-160, and Thr-163.

The protein belongs to the peptidase T1B family. HslV subfamily. In terms of assembly, a double ring-shaped homohexamer of HslV is capped on each side by a ring-shaped HslU homohexamer. The assembly of the HslU/HslV complex is dependent on binding of ATP.

It is found in the cytoplasm. It catalyses the reaction ATP-dependent cleavage of peptide bonds with broad specificity.. Its activity is regulated as follows. Allosterically activated by HslU binding. In terms of biological role, protease subunit of a proteasome-like degradation complex believed to be a general protein degrading machinery. The chain is ATP-dependent protease subunit HslV from Vibrio parahaemolyticus serotype O3:K6 (strain RIMD 2210633).